Consider the following 428-residue polypeptide: Adenylosuccinate synthetase (428 aa).

GTP is bound by residues 12-18 (GDEGKGK) and 40-42 (GHT). The active-site Proton acceptor is the Asp13. Mg(2+) is bound by residues Asp13 and Gly40. IMP-binding positions include 13–16 (DEGK), 38–41 (NAGH), Thr128, Arg142, Gln223, Thr238, and Arg302. The active-site Proton donor is the His41. 298–304 (VTTGRPR) lines the substrate pocket. GTP contacts are provided by residues Arg304, 330-332 (KLD), and 412-414 (GTG).

The protein belongs to the adenylosuccinate synthetase family. In terms of assembly, homodimer. The cofactor is Mg(2+).

It localises to the cytoplasm. The catalysed reaction is IMP + L-aspartate + GTP = N(6)-(1,2-dicarboxyethyl)-AMP + GDP + phosphate + 2 H(+). It functions in the pathway purine metabolism; AMP biosynthesis via de novo pathway; AMP from IMP: step 1/2. Its function is as follows. Plays an important role in the de novo pathway of purine nucleotide biosynthesis. Catalyzes the first committed step in the biosynthesis of AMP from IMP. This chain is Adenylosuccinate synthetase, found in Bifidobacterium adolescentis (strain ATCC 15703 / DSM 20083 / NCTC 11814 / E194a).